We begin with the raw amino-acid sequence, 242 residues long: Putative serine/threonine-protein kinase (242 aa).

In terms of domain architecture, Protein kinase spans 49–242; it reads FSSKNKVGEG…KSDVYSFGVL (194 aa). ATP is bound by residues 55-63 and K77; that span reads VGEGGCGAV. Catalysis depends on D177, which acts as the Proton acceptor.

This sequence belongs to the protein kinase superfamily. Ser/Thr protein kinase family.

It catalyses the reaction L-seryl-[protein] + ATP = O-phospho-L-seryl-[protein] + ADP + H(+). The enzyme catalyses L-threonyl-[protein] + ATP = O-phospho-L-threonyl-[protein] + ADP + H(+). The chain is Putative serine/threonine-protein kinase from Helianthus annuus (Common sunflower).